Reading from the N-terminus, the 285-residue chain is Putative lipoprotein SCO4650 (285 aa).

The N-terminal stretch at 1–20 (MTGTTARRTVVSVAVSAALA) is a signal peptide. The N-palmitoyl cysteine moiety is linked to residue cysteine 21. Cysteine 21 carries the S-diacylglycerol cysteine lipid modification. Residues 27 to 63 (GPGGSDDAGHSTGPTGSARPSASAPASSRAPALTGPS) are disordered. Residues 43 to 58 (SARPSASAPASSRAPA) are compositionally biased toward low complexity.

The protein localises to the cell membrane. The polypeptide is Putative lipoprotein SCO4650 (Streptomyces coelicolor (strain ATCC BAA-471 / A3(2) / M145)).